A 917-amino-acid polypeptide reads, in one-letter code: Auxin response factor 17 (917 aa).

Positions 134 to 236 (FCKTLTASDT…QLLLGIRRAN (103 aa)) form a DNA-binding region, TF-B3. Positions 571 to 649 (SVPNALSPFS…RPTAVPVPDP (79 aa)) are disordered. Composition is skewed to low complexity over residues 576–594 (LSPFSQLSSPSQSSPMTLQ) and 604–620 (SYPDTSMSSLSPSNTST). The 85-residue stretch at 786-870 (ATFVKVYKSG…SCIKILSPQE (85 aa)) folds into the PB1 domain.

The protein belongs to the ARF family. As to quaternary structure, homodimers and heterodimers. Expressed in roots, culms, leaves and young panicles.

The protein localises to the nucleus. Functionally, auxin response factors (ARFs) are transcriptional factors that bind specifically to the DNA sequence 5'-TGTCTC-3' found in the auxin-responsive promoter elements (AuxREs). The protein is Auxin response factor 17 (ARF17) of Oryza sativa subsp. japonica (Rice).